Reading from the N-terminus, the 439-residue chain is Sorting nexin-31 (439 aa).

In terms of domain architecture, PX spans 1–109 (MKMHFCIPVS…EFLTLVQLHT (109 aa)). The interval 384–409 (TEQSPEMQIEVPEQGRSKKHPSQPSQ) is disordered.

This sequence belongs to the sorting nexin family. Interacts with CCDC22, CCDC93, VPS26C and VPS35L, associates with the retriever and CCC complexes.

In terms of biological role, may be involved in protein trafficking. The protein is Sorting nexin-31 (Snx31) of Mus musculus (Mouse).